Consider the following 453-residue polypeptide: Bifunctional protein GlmU (453 aa).

Positions 1–228 (MPHWAAVIMA…VHEALGINSR (228 aa)) are pyrophosphorylase. UDP-N-acetyl-alpha-D-glucosamine is bound by residues lysine 23, glutamine 73, 78 to 79 (GT), 100 to 102 (SGD), glycine 139, glutamate 153, asparagine 168, and asparagine 226. Residue aspartate 102 coordinates Mg(2+). A Mg(2+)-binding site is contributed by asparagine 226. The interval 229–249 (AQLAAAEDVARQRILSYWMEE) is linker. The segment at 250–453 (GVTIIDPRST…IENWVRNKKK (204 aa)) is N-acetyltransferase. Arginine 331 and lysine 349 together coordinate UDP-N-acetyl-alpha-D-glucosamine. Residue histidine 361 is the Proton acceptor of the active site. The UDP-N-acetyl-alpha-D-glucosamine site is built by tyrosine 364 and asparagine 375. Acetyl-CoA-binding positions include alanine 378, 384-385 (NY), serine 403, alanine 421, and arginine 438.

It in the N-terminal section; belongs to the N-acetylglucosamine-1-phosphate uridyltransferase family. This sequence in the C-terminal section; belongs to the transferase hexapeptide repeat family. As to quaternary structure, homotrimer. It depends on Mg(2+) as a cofactor.

It localises to the cytoplasm. The catalysed reaction is alpha-D-glucosamine 1-phosphate + acetyl-CoA = N-acetyl-alpha-D-glucosamine 1-phosphate + CoA + H(+). It catalyses the reaction N-acetyl-alpha-D-glucosamine 1-phosphate + UTP + H(+) = UDP-N-acetyl-alpha-D-glucosamine + diphosphate. It functions in the pathway nucleotide-sugar biosynthesis; UDP-N-acetyl-alpha-D-glucosamine biosynthesis; N-acetyl-alpha-D-glucosamine 1-phosphate from alpha-D-glucosamine 6-phosphate (route II): step 2/2. It participates in nucleotide-sugar biosynthesis; UDP-N-acetyl-alpha-D-glucosamine biosynthesis; UDP-N-acetyl-alpha-D-glucosamine from N-acetyl-alpha-D-glucosamine 1-phosphate: step 1/1. The protein operates within bacterial outer membrane biogenesis; LPS lipid A biosynthesis. Its function is as follows. Catalyzes the last two sequential reactions in the de novo biosynthetic pathway for UDP-N-acetylglucosamine (UDP-GlcNAc). The C-terminal domain catalyzes the transfer of acetyl group from acetyl coenzyme A to glucosamine-1-phosphate (GlcN-1-P) to produce N-acetylglucosamine-1-phosphate (GlcNAc-1-P), which is converted into UDP-GlcNAc by the transfer of uridine 5-monophosphate (from uridine 5-triphosphate), a reaction catalyzed by the N-terminal domain. The chain is Bifunctional protein GlmU from Desulfitobacterium hafniense (strain DSM 10664 / DCB-2).